The following is a 313-amino-acid chain: Ribosomal RNA small subunit methyltransferase H (313 aa).

S-adenosyl-L-methionine contacts are provided by residues 31 to 33, Asp51, Phe77, Asp95, and Gln102; that span reads GGH.

It belongs to the methyltransferase superfamily. RsmH family.

It is found in the cytoplasm. It carries out the reaction cytidine(1402) in 16S rRNA + S-adenosyl-L-methionine = N(4)-methylcytidine(1402) in 16S rRNA + S-adenosyl-L-homocysteine + H(+). Functionally, specifically methylates the N4 position of cytidine in position 1402 (C1402) of 16S rRNA. The polypeptide is Ribosomal RNA small subunit methyltransferase H (Xylella fastidiosa (strain M12)).